Consider the following 178-residue polypeptide: uncharacterized protein (178 aa).

This sequence belongs to the mimivirus L39/R874 family.

This is an uncharacterized protein from Acanthamoeba polyphaga (Amoeba).